The following is a 187-amino-acid chain: Phosphatidylethanolamine-binding protein 1 (187 aa).

Ser-6 and Ser-13 each carry phosphoserine. The residue at position 42 (Thr-42) is a Phosphothreonine. A phosphoserine mark is found at Ser-52, Ser-54, Ser-98, and Ser-153. The segment at 93–134 (KGNDISSGTVLSDYVGSGPPKGTGLHRYVWLVYEQDRPLKCD) is interaction with RAF1.

Belongs to the phosphatidylethanolamine-binding protein family. As to quaternary structure, has a tendency to form dimers by disulfide cross-linking. Interacts with RAF1 and this interaction is enhanced if RAF1 is phosphorylated on residues 'Ser-338', 'Ser-339', 'Tyr-340' and 'Tyr-341'. Interacts with ALOX15; in response to IL13/interleukin-13, prevents the interaction of PEBP1 with RAF1 to activate the ERK signaling cascade.

It is found in the cytoplasm. In terms of biological role, binds ATP, opioids and phosphatidylethanolamine. Has lower affinity for phosphatidylinositol and phosphatidylcholine. Serine protease inhibitor which inhibits thrombin, neuropsin and chymotrypsin but not trypsin, tissue type plasminogen activator and elastase. Inhibits the kinase activity of RAF1 by inhibiting its activation and by dissociating the RAF1/MEK complex and acting as a competitive inhibitor of MEK phosphorylation. Functionally, HCNP may be involved in the function of the presynaptic cholinergic neurons of the central nervous system. HCNP increases the production of choline acetyltransferase but not acetylcholinesterase. Seems to be mediated by a specific receptor. In Pongo abelii (Sumatran orangutan), this protein is Phosphatidylethanolamine-binding protein 1 (PEBP1).